The primary structure comprises 719 residues: Penicillin-binding protein 1A (719 aa).

The segment at 62 to 223 (LIADLGSERR…NQYDPYSHPE (162 aa)) is transglycosylase. E91 (proton donor; for transglycosylase activity) is an active-site residue. The segment at 297–611 (DVYTNVDQEA…RLTPLVGNGL (315 aa)) is transpeptidase. S370 acts as the Acyl-ester intermediate; for transpeptidase activity in catalysis. Positions 652–719 (ARSTWSSPAP…QNQNPQPAQP (68 aa)) are disordered. A compositionally biased stretch (low complexity) spans 654–719 (STWSSPAPQQ…QNQNPQPAQP (66 aa)).

This sequence in the N-terminal section; belongs to the glycosyltransferase 51 family. The protein in the C-terminal section; belongs to the transpeptidase family. In terms of assembly, interacts with MreC in the elongasome.

The protein localises to the secreted. The enzyme catalyses [GlcNAc-(1-&gt;4)-Mur2Ac(oyl-L-Ala-gamma-D-Glu-L-Lys-D-Ala-D-Ala)](n)-di-trans,octa-cis-undecaprenyl diphosphate + beta-D-GlcNAc-(1-&gt;4)-Mur2Ac(oyl-L-Ala-gamma-D-Glu-L-Lys-D-Ala-D-Ala)-di-trans,octa-cis-undecaprenyl diphosphate = [GlcNAc-(1-&gt;4)-Mur2Ac(oyl-L-Ala-gamma-D-Glu-L-Lys-D-Ala-D-Ala)](n+1)-di-trans,octa-cis-undecaprenyl diphosphate + di-trans,octa-cis-undecaprenyl diphosphate + H(+). It carries out the reaction Preferential cleavage: (Ac)2-L-Lys-D-Ala-|-D-Ala. Also transpeptidation of peptidyl-alanyl moieties that are N-acyl substituents of D-alanine.. It participates in cell wall biogenesis; peptidoglycan biosynthesis. Its function is as follows. Cell wall formation. In Streptococcus pneumoniae (strain ATCC BAA-255 / R6), this protein is Penicillin-binding protein 1A (pbpA).